A 676-amino-acid polypeptide reads, in one-letter code: A-type ATP synthase subunit I (676 aa).

Helical transmembrane passes span 341 to 361, 390 to 410, 449 to 469, 490 to 510, 538 to 558, 564 to 584, 590 to 610, and 617 to 637; these read VFIAIFFPIFFGMMLGDIGYG, AGVMSIIFGFIYGECFGPFIV, ILLFATIVIGIAKILFGFALG, IIGVLGLAMIIFGFAYNVGVF, LNVYYLAALPLLVVWFILFVM, MGAMGVILAVELLTWFGQIMS, AIGLSSVYIAFVINFIGMKLI, and IPIVGAIVLLIGHVGNLILGI.

This sequence belongs to the V-ATPase 116 kDa subunit family. As to quaternary structure, has multiple subunits with at least A(3), B(3), C, D, E, F, H, I and proteolipid K(x).

It localises to the cell membrane. Component of the A-type ATP synthase that produces ATP from ADP in the presence of a proton gradient across the membrane. The chain is A-type ATP synthase subunit I from Archaeoglobus fulgidus (strain ATCC 49558 / DSM 4304 / JCM 9628 / NBRC 100126 / VC-16).